The chain runs to 210 residues: Endo-1,4-beta-xylanase A (210 aa).

The first 19 residues, 1 to 19 (MKLKKKMLTLLLTASMSFG), serve as a signal peptide directing secretion. Positions 20–210 (LFGATSSAAT…SSGRSNVTVW (191 aa)) constitute a GH11 domain. The active-site Nucleophile is E104. E197 (proton donor) is an active-site residue.

It belongs to the glycosyl hydrolase 11 (cellulase G) family.

It carries out the reaction Endohydrolysis of (1-&gt;4)-beta-D-xylosidic linkages in xylans.. It functions in the pathway glycan degradation; xylan degradation. The chain is Endo-1,4-beta-xylanase A (xynA) from Geobacillus stearothermophilus (Bacillus stearothermophilus).